The following is a 331-amino-acid chain: Putative ankyrin repeat protein FPV012 (331 aa).

ANK repeat units lie at residues 11–40 (DGYT…NPNT), 44–73 (DSYT…NVDK), 77–106 (DGYT…NPNY), and 110–139 (YGIT…NCNQ).

In Vertebrata (FPV), this protein is Putative ankyrin repeat protein FPV012.